Here is a 409-residue protein sequence, read N- to C-terminus: Probable sodium/metabolite cotransporter BASS6, chloroplastic (409 aa).

The transit peptide at 1–49 (MSVITTPIETLHLKSTLRLLPRAVYRSQRIQVFPPNIFSNTSLSSPLRI) directs the protein to the chloroplast. The next 9 membrane-spanning stretches (helical) occupy residues 100–120 (ILPHVVLASTILALIYPPSFT), 121–141 (WFTSRYFVPALGFLMFAVGIN), 170–190 (VLGFIFGLAAVSLFQLPTPIG), 191–211 (AGIMLVSCVSGAQLSNYATFL), 221–241 (IVMTSLSTATAVLVTPMLSLL), 253–273 (GMISSILQVVIAPIAAGLLLN), 285–305 (PFLPILSVLDTACCVGAPLAL), 316–336 (ATILLLVTMFHLSAFLAGYFL), and 381–401 (IPPAISTVVMSLMGFTLVLIW).

This sequence belongs to the bile acid:sodium symporter (BASS) (TC 2.A.28) family.

The protein localises to the membrane. It localises to the plastid. Its subcellular location is the chloroplast envelope. Its function is as follows. May function as sodium-coupled metabolite transporter across the chloroplast envelope. This chain is Probable sodium/metabolite cotransporter BASS6, chloroplastic (BASS6), found in Arabidopsis thaliana (Mouse-ear cress).